Consider the following 442-residue polypeptide: Lipoyl synthase, apicoplast (442 aa).

An N-terminal signal peptide occupies residues 1–25 (MHVLTPSLYIYAFFIVCVRLKCGRS). The segment at 92 to 154 (LLRSESATDE…EKKPDWFHVP (63 aa)) is disordered. A compositionally biased stretch (basic and acidic residues) spans 109-127 (LKEKLKESPANWGKDKQEE). Cys177, Cys182, Cys188, Cys203, Cys207, Cys210, and Ser418 together coordinate [4Fe-4S] cluster. Positions 189–407 (WNIGTATIML…KEEGMKMGFK (219 aa)) constitute a Radical SAM core domain.

The protein belongs to the radical SAM superfamily. Lipoyl synthase family. [4Fe-4S] cluster is required as a cofactor.

It localises to the plastid. Its subcellular location is the apicoplast. It carries out the reaction [[Fe-S] cluster scaffold protein carrying a second [4Fe-4S](2+) cluster] + N(6)-octanoyl-L-lysyl-[protein] + 2 oxidized [2Fe-2S]-[ferredoxin] + 2 S-adenosyl-L-methionine + 4 H(+) = [[Fe-S] cluster scaffold protein] + N(6)-[(R)-dihydrolipoyl]-L-lysyl-[protein] + 4 Fe(3+) + 2 hydrogen sulfide + 2 5'-deoxyadenosine + 2 L-methionine + 2 reduced [2Fe-2S]-[ferredoxin]. The protein operates within protein modification; protein lipoylation via endogenous pathway; protein N(6)-(lipoyl)lysine from octanoyl-[acyl-carrier-protein]: step 2/2. Its function is as follows. Catalyzes the radical-mediated insertion of two sulfur atoms into the C-6 and C-8 positions of the octanoyl moiety bound to the lipoyl domains of lipoate-dependent enzymes, thereby converting the octanoylated domains into lipoylated derivatives. The protein is Lipoyl synthase, apicoplast of Plasmodium vivax (strain Salvador I).